The following is a 182-amino-acid chain: Peptidyl-tRNA hydrolase (182 aa).

Residue Tyr-14 participates in tRNA binding. The active-site Proton acceptor is His-19. The tRNA site is built by Phe-64, Asn-66, and Asn-112.

It belongs to the PTH family. In terms of assembly, monomer.

The protein resides in the cytoplasm. The enzyme catalyses an N-acyl-L-alpha-aminoacyl-tRNA + H2O = an N-acyl-L-amino acid + a tRNA + H(+). In terms of biological role, hydrolyzes ribosome-free peptidyl-tRNAs (with 1 or more amino acids incorporated), which drop off the ribosome during protein synthesis, or as a result of ribosome stalling. Catalyzes the release of premature peptidyl moieties from peptidyl-tRNA molecules trapped in stalled 50S ribosomal subunits, and thus maintains levels of free tRNAs and 50S ribosomes. The chain is Peptidyl-tRNA hydrolase from Wolbachia sp. subsp. Brugia malayi (strain TRS).